Here is a 238-residue protein sequence, read N- to C-terminus: Ribonuclease PH (238 aa).

Phosphate-binding positions include Arg-86 and 124–126 (GTR).

Belongs to the RNase PH family. As to quaternary structure, homohexameric ring arranged as a trimer of dimers.

It carries out the reaction tRNA(n+1) + phosphate = tRNA(n) + a ribonucleoside 5'-diphosphate. Functionally, phosphorolytic 3'-5' exoribonuclease that plays an important role in tRNA 3'-end maturation. Removes nucleotide residues following the 3'-CCA terminus of tRNAs; can also add nucleotides to the ends of RNA molecules by using nucleoside diphosphates as substrates, but this may not be physiologically important. Probably plays a role in initiation of 16S rRNA degradation (leading to ribosome degradation) during starvation. The sequence is that of Ribonuclease PH from Citrobacter koseri (strain ATCC BAA-895 / CDC 4225-83 / SGSC4696).